Reading from the N-terminus, the 495-residue chain is Sugar phosphate exchanger 3 (495 aa).

Residues 16-36 (FSHHHMVVFLLTFFSYSLLHA) form a helical membrane-spanning segment. Asn-58 is a glycosylation site (N-linked (GlcNAc...) asparagine). 5 helical membrane-spanning segments follow: residues 82 to 102 (TLFLGMLDTIFLFSYAVGLFI), 114 to 134 (WVLSFGMCSSALVVFVFGTLT), 148 to 168 (LWIVNGLLQSTGWPCVVAVMG), 178 to 198 (VVFGLWSACASVGNILGACLA), and 210 to 230 (FLVTAAVQFAGGIIIFFGLLV). Residue Asn-267 is glycosylated (N-linked (GlcNAc...) asparagine). 6 helical membrane passes run 298-318 (LAYACLKLVNYSFFFWLPFYL), 334-354 (IWYDVGGIIGGTLQGFISDML), 358-378 (APVLALSLLLAIGSLVGYSRS), 387-407 (LLMAVTGFFIGGPSNMISSAI), 429-449 (GIVDGTGSIGAAVGQYLVSLI), and 453-473 (LGWMWVFYFFILMTSCTVLFI).

It belongs to the major facilitator superfamily. Organophosphate:Pi antiporter (OPA) (TC 2.A.1.4) family. Interacts with ATRAID; the interaction is direct and both proteins are mutually dependent for their stability. Glycosylated.

Its subcellular location is the endoplasmic reticulum membrane. It is found in the lysosome membrane. Its function is as follows. Unlike the other SLC37 members, lacks glucose-6-phosphate antiporter activity. In osteoclasts, forms a transporter complex with ATRAID for nitrogen-containing-bisphophonates (N-BPs) required for releasing N-BP molecules that have trafficked to lysosomes through fluid-phase endocytosis into the cytosol. The polypeptide is Sugar phosphate exchanger 3 (SLC37A3) (Bos taurus (Bovine)).